A 129-amino-acid chain; its full sequence is Large ribosomal subunit protein bL12 (129 aa).

Belongs to the bacterial ribosomal protein bL12 family. As to quaternary structure, homodimer. Part of the ribosomal stalk of the 50S ribosomal subunit. Forms a multimeric L10(L12)X complex, where L10 forms an elongated spine to which 2 to 4 L12 dimers bind in a sequential fashion. Binds GTP-bound translation factors.

Functionally, forms part of the ribosomal stalk which helps the ribosome interact with GTP-bound translation factors. Is thus essential for accurate translation. In Maridesulfovibrio salexigens (strain ATCC 14822 / DSM 2638 / NCIMB 8403 / VKM B-1763) (Desulfovibrio salexigens), this protein is Large ribosomal subunit protein bL12.